The chain runs to 387 residues: Guanylate kinase 1 (387 aa).

Residues 137-319 (EKPIVISGPS…CYKKLKNLLG (183 aa)) form the Guanylate kinase-like domain. 144–151 (GPSGVGKG) serves as a coordination point for ATP. Active-site residues include Arg-177, Arg-270, and Arg-281. The ATP site is built by Asn-304 and Asp-305.

The protein belongs to the guanylate kinase family. In terms of assembly, monomer.

It carries out the reaction GMP + ATP = GDP + ADP. Its function is as follows. Essential for recycling GMP and indirectly, cGMP. Required for normal development of the gametophyte and embryo, in association with GK2. In Arabidopsis thaliana (Mouse-ear cress), this protein is Guanylate kinase 1 (GK-1).